Reading from the N-terminus, the 397-residue chain is MLYYFNTLAMMLRMQRVESCHTEEYGDEPEAIAVVPGRFHLLGEYLWFAQGNTLSMAIDQTLTLCVSRRKDSTFRLFSLTLGERRKISTANLRYRKEDRWANSVKAVILSFMDGGYHLTGLNCTILSQIPPDAGLGTPNALKVAMALVLGRLFAATLPKESVVSIVEHANERYLKTHAHRADILCVLFAKQGSCVRTDHRKKQAELCQFPSEGKRIVLTDSRVPRFIAREEFTARLKRCVDAYELVKRNPDMPRAMSKLMAAALEEIDVPEGIRRRVISLVRESLGVDEAIEALRKRDFAAFSRVVNRSHERLRDRFEISCPELDWLVKRALEFVDPDAPDVVCSRLTGRGFGGCTYAILRDQDFEPYLERLDEYERIFGFKAAAYEVQCSEGARVL.

Ser78 serves as a coordination point for ATP. The active-site Proton acceptor is Asp182.

This sequence belongs to the GHMP kinase family. GalK subfamily.

Its subcellular location is the cytoplasm. It carries out the reaction alpha-D-galactose + ATP = alpha-D-galactose 1-phosphate + ADP + H(+). Its pathway is carbohydrate metabolism; galactose metabolism. Catalyzes the transfer of the gamma-phosphate of ATP to D-galactose to form alpha-D-galactose-1-phosphate (Gal-1-P). This is Putative galactokinase (galK) from Treponema pallidum (strain Nichols).